A 211-amino-acid chain; its full sequence is Thiamine-phosphate synthase (211 aa).

4-amino-2-methyl-5-(diphosphooxymethyl)pyrimidine contacts are provided by residues 37–41 (QLRIK) and Asn-69. The Mg(2+) site is built by Asp-70 and Asp-89. Residue Ser-108 participates in 4-amino-2-methyl-5-(diphosphooxymethyl)pyrimidine binding. 134-136 (TQT) lines the 2-[(2R,5Z)-2-carboxy-4-methylthiazol-5(2H)-ylidene]ethyl phosphate pocket. Residue Lys-137 participates in 4-amino-2-methyl-5-(diphosphooxymethyl)pyrimidine binding. 2-[(2R,5Z)-2-carboxy-4-methylthiazol-5(2H)-ylidene]ethyl phosphate contacts are provided by residues Gly-166 and 186–187 (VS).

This sequence belongs to the thiamine-phosphate synthase family. Mg(2+) is required as a cofactor.

It carries out the reaction 2-[(2R,5Z)-2-carboxy-4-methylthiazol-5(2H)-ylidene]ethyl phosphate + 4-amino-2-methyl-5-(diphosphooxymethyl)pyrimidine + 2 H(+) = thiamine phosphate + CO2 + diphosphate. The catalysed reaction is 2-(2-carboxy-4-methylthiazol-5-yl)ethyl phosphate + 4-amino-2-methyl-5-(diphosphooxymethyl)pyrimidine + 2 H(+) = thiamine phosphate + CO2 + diphosphate. The enzyme catalyses 4-methyl-5-(2-phosphooxyethyl)-thiazole + 4-amino-2-methyl-5-(diphosphooxymethyl)pyrimidine + H(+) = thiamine phosphate + diphosphate. It participates in cofactor biosynthesis; thiamine diphosphate biosynthesis; thiamine phosphate from 4-amino-2-methyl-5-diphosphomethylpyrimidine and 4-methyl-5-(2-phosphoethyl)-thiazole: step 1/1. Its function is as follows. Condenses 4-methyl-5-(beta-hydroxyethyl)thiazole monophosphate (THZ-P) and 2-methyl-4-amino-5-hydroxymethyl pyrimidine pyrophosphate (HMP-PP) to form thiamine monophosphate (TMP). The polypeptide is Thiamine-phosphate synthase (Salmonella paratyphi A (strain ATCC 9150 / SARB42)).